The sequence spans 553 residues: Transcription factor 7-like 1 (553 aa).

Over residues 1-11 (MPQLNSGGGDE) the composition is skewed to gly residues. Positions 1–61 (MPQLNSGGGD…SENHSSDSDS (61 aa)) are interaction with CTNNB1. 3 disordered regions span residues 1-77 (MPQL…EKPR), 183-213 (GTPP…PYYP), and 392-474 (SARD…LTTK). Basic and acidic residues-rich tracts occupy residues 17 to 32 (ELIR…EKSP) and 52 to 77 (SENH…EKPR). The interaction with AES and TLE4 stretch occupies residues 109 to 312 (LGGHYLPNGA…SPNLITKPSV (204 aa)). Positions 324–392 (IKKPLNAFML…LHSQLYPTWS (69 aa)) form a DNA-binding region, HMG box. The span at 407-416 (KQSPEMEITK) shows a compositional bias: basic and acidic residues. Residues 408-553 (QSPEMEITKT…PLSLVTKSSD (146 aa)) are interaction with CTBP. Over residues 444 to 463 (SPATPSAALASPAAPAATHS) the composition is skewed to low complexity. Residues 464-473 (EQAQPLSLTT) show a composition bias toward polar residues.

It belongs to the TCF/LEF family. Interacts with csnk1e, ctnnb1, ctbp, dact1 and gsk3b. May interact with ase and tle4. In terms of processing, phosphorylated. Phosphorylation by csnk1e promotes binding to ctnnb1 while phosphorylation by gsk3b may reverse this effect.

Its subcellular location is the nucleus. Participates in the Wnt signaling pathway. Binds to DNA and acts as a repressor in the absence of ctnnb1, and as an activator in its presence. Required early in development for the establishment of the dorsal body axis in response to maternal Wnt signaling. This chain is Transcription factor 7-like 1 (tcf7l1), found in Xenopus tropicalis (Western clawed frog).